A 476-amino-acid chain; its full sequence is Cys-Gly metallodipeptidase dug1 (476 aa).

A Zn(2+)-binding site is contributed by His-99. Residue Asp-101 is part of the active site. Residue Asp-133 coordinates Zn(2+). The active-site Proton acceptor is the Glu-167. Zn(2+) contacts are provided by Glu-168, Asp-196, and His-446.

Belongs to the peptidase M20A family. Homodimer. Component of the GSH degradosomal complex. Zn(2+) is required as a cofactor. Mn(2+) serves as cofactor.

It localises to the cytoplasm. Functionally, catalytic component of the GSH degradosomal complex involved in the degradation of glutathione (GSH) and other peptides containing a gamma-glu-X bond. Has a Gly-Cys dipeptidase activity. In Schizosaccharomyces pombe (strain 972 / ATCC 24843) (Fission yeast), this protein is Cys-Gly metallodipeptidase dug1 (dug1).